A 359-amino-acid polypeptide reads, in one-letter code: 3-dehydroquinate synthase (359 aa).

Residues 71–76 (DGEQYK), 105–109 (GVIGD), 129–130 (TT), Lys-142, Lys-151, and 169–172 (CLAT) contribute to the NAD(+) site. Zn(2+) is bound by residues Glu-184, His-247, and His-264.

This sequence belongs to the sugar phosphate cyclases superfamily. Dehydroquinate synthase family. Co(2+) serves as cofactor. It depends on Zn(2+) as a cofactor. The cofactor is NAD(+).

It localises to the cytoplasm. It carries out the reaction 7-phospho-2-dehydro-3-deoxy-D-arabino-heptonate = 3-dehydroquinate + phosphate. It participates in metabolic intermediate biosynthesis; chorismate biosynthesis; chorismate from D-erythrose 4-phosphate and phosphoenolpyruvate: step 2/7. Catalyzes the conversion of 3-deoxy-D-arabino-heptulosonate 7-phosphate (DAHP) to dehydroquinate (DHQ). The chain is 3-dehydroquinate synthase from Baumannia cicadellinicola subsp. Homalodisca coagulata.